Reading from the N-terminus, the 744-residue chain is MEQTYQYAWIIPFLPLPVPMLIGLGLLLFPTATKSLRRMWAFQSVLLLSIVMIFSMNLSIQQINSSSVYQYVWSWIINNDFSLEFGYLIDPLTSIMSILITTVGIMVLIYSDNYMSHDHGYLRFFAYMSFFSTSMLGLVTSSNLIQIYIFWELVGICSYLLIGFWFTRPVAAKACQKAFVTNRVGDFGLLLGILGFYWITGSFEFRNLFQIFNNLISNNEVNLLFVTLCAVLLFAGAIAKSAQFPLHVWLPDAMEGPTPISALIHAATMVAAGIFLVARLLPLFIVIPHIMNFISLIGIITVFLGATLALAQKDIKRGLAYSTMSQLGYMMLALGMGSYRSALFHLITHAYSKALLFLGSGSVIHSMETLVGYCPKKSQNMVLMGGLTKHVPITKTSFLLGTLSLCGIPPLACFWSKDEILNDSWLYSPIFAIIAWSTAGLTAFYMCRIYLLTFEGHLNVQFQNYSGKKNTPFYSISLWGKEGSKISNKNFRLVTLLKMKKNGRASFFSNKVYKIDENLRNIIQPFLSIPHFGTTKTYSYPYESDNTMLFPILILVLFTLFVGFLGIPFNQDGVDLDILSKWLTPSINLLHKNSNNSIDWYEFCKDAVFSVTISSFGIFIAFFLYKPVYSSFQNLDLINSFVKIDPKRIFSDKIKNGIYDWSYNRGYIDAFYGTFLTVGIRKLAEFAHFFDRRIIDGIPNGVGLMSFFVAEVIKSVGGGRISSYLFFYFSYVSIFLVIYYFLNF.

Transmembrane regions (helical) follow at residues 9–29, 40–60, 89–109, 125–145, 147–167, 185–205, 219–239, 258–278, 290–312, 327–347, 354–374, 396–416, 425–445, 549–569, 608–628, and 724–744; these read WIIPFLPLPVPMLIGLGLLLF, WAFQSVLLLSIVMIFSMNLSI, IDPLTSIMSILITTVGIMVLI, FAYMSFFSTSMLGLVTSSNLI, IYIFWELVGICSYLLIGFWFT, GDFGLLLGILGFYWITGSFEF, NEVNLLFVTLCAVLLFAGAIA, TPISALIHAATMVAAGIFLVA, IMNFISLIGIITVFLGATLALAQ, LGYMMLALGMGSYRSALFHLI, ALLFLGSGSVIHSMETLVGYC, TSFLLGTLSLCGIPPLACFWS, WLYSPIFAIIAWSTAGLTAFY, LFPILILVLFTLFVGFLGIPF, VFSVTISSFGIFIAFFLYKPV, and YLFFYFSYVSIFLVIYYFLNF.

Belongs to the complex I subunit 5 family. In terms of assembly, NDH is composed of at least 16 different subunits, 5 of which are encoded in the nucleus.

It localises to the plastid. The protein localises to the chloroplast thylakoid membrane. It carries out the reaction a plastoquinone + NADH + (n+1) H(+)(in) = a plastoquinol + NAD(+) + n H(+)(out). The enzyme catalyses a plastoquinone + NADPH + (n+1) H(+)(in) = a plastoquinol + NADP(+) + n H(+)(out). Functionally, NDH shuttles electrons from NAD(P)H:plastoquinone, via FMN and iron-sulfur (Fe-S) centers, to quinones in the photosynthetic chain and possibly in a chloroplast respiratory chain. The immediate electron acceptor for the enzyme in this species is believed to be plastoquinone. Couples the redox reaction to proton translocation, and thus conserves the redox energy in a proton gradient. The chain is NAD(P)H-quinone oxidoreductase subunit 5, chloroplastic (ndhF) from Adenocaulon himalaicum (Trailplant).